The following is a 743-amino-acid chain: MSLLLEPSHKQIKEEKLYQQMGLSDEEFALIESIIGRLPNYTETGIFSVMWSEHCSYKNSKPVLSKFPTKGEHVLQGPGEGAGIVDIGDNQAVVFKIESHNHPSAIEPYQGAATGVGGIIRDVFSMGARPIAVLNSLRFGELTSPRVKYLFEEVVAGIAGYGNCIGIPTVGGEVHFDQSYEGNPLVNAMCVGLINHEDIKKGQAKGVGNTVMYVGAKTGRDGIHGATFASEEFSDESEEKRSAVQVGDPFMEKLLLEACLEVIKNDALVGIQDMGAAGLTSSSAEMASKAGSGIEMNLDLIPQRETGMSAYEMMLSESQERMLLVIEKGREQEIIDIFEKYDLEAVSVGHVTDDKMLRLLHQGEVVCELPVDALAEEAPVYHKPSSEPAYYREFLETKVEAPAITDAAQTLKQLLQQPTIASKEWVYDQYDYMVRTNTVVAPGSDAGVLRIRGTKKALAMTTDCNARYLYLDPEVGGKIAVAEAARNIVCSGARPLAVTDNLNFGNPEKPEIFWQIEKSADGISEACRTLSTPVIGGNVSLYNESNGTAIYPTPVIGMVGLVEDTAHITTKSFQQAGDVIFVIGETKEEFAGSELQKMTEGRIYGKAPEIDLDVELARQEALLAAIQNGLVQSAHDVSEGGLGVALAESTFGTDGLGADIQIDLDSEASLFSETQSRFVVTVKPEHREAFAAAVKDAKEVGTVTNDGVFTVKNQEGQQWIHAAVNELERAWKGAIPCLLKSEA.

His54 is a catalytic residue. ATP contacts are provided by Tyr57 and Lys96. A Mg(2+)-binding site is contributed by Glu98. Substrate-binding positions include 99-102 (SHNH) and Arg121. Catalysis depends on His100, which acts as the Proton acceptor. Asp122 serves as a coordination point for Mg(2+). Gln245 serves as a coordination point for substrate. Asp273 is a Mg(2+) binding site. 317-319 (ESQ) lines the substrate pocket. The ATP site is built by Asp500 and Gly537. Asn538 contributes to the Mg(2+) binding site. A substrate-binding site is contributed by Ser540.

The protein belongs to the FGAMS family. Monomer. Part of the FGAM synthase complex composed of 1 PurL, 1 PurQ and 2 PurS subunits.

It localises to the cytoplasm. The enzyme catalyses N(2)-formyl-N(1)-(5-phospho-beta-D-ribosyl)glycinamide + L-glutamine + ATP + H2O = 2-formamido-N(1)-(5-O-phospho-beta-D-ribosyl)acetamidine + L-glutamate + ADP + phosphate + H(+). The protein operates within purine metabolism; IMP biosynthesis via de novo pathway; 5-amino-1-(5-phospho-D-ribosyl)imidazole from N(2)-formyl-N(1)-(5-phospho-D-ribosyl)glycinamide: step 1/2. Its function is as follows. Part of the phosphoribosylformylglycinamidine synthase complex involved in the purines biosynthetic pathway. Catalyzes the ATP-dependent conversion of formylglycinamide ribonucleotide (FGAR) and glutamine to yield formylglycinamidine ribonucleotide (FGAM) and glutamate. The FGAM synthase complex is composed of three subunits. PurQ produces an ammonia molecule by converting glutamine to glutamate. PurL transfers the ammonia molecule to FGAR to form FGAM in an ATP-dependent manner. PurS interacts with PurQ and PurL and is thought to assist in the transfer of the ammonia molecule from PurQ to PurL. The chain is Phosphoribosylformylglycinamidine synthase subunit PurL from Bacillus pumilus (strain SAFR-032).